We begin with the raw amino-acid sequence, 162 residues long: ATP synthase subunit b (162 aa).

The helical transmembrane segment at leucine 10 to tyrosine 29 threads the bilayer.

Belongs to the ATPase B chain family. F-type ATPases have 2 components, F(1) - the catalytic core - and F(0) - the membrane proton channel. F(1) has five subunits: alpha(3), beta(3), gamma(1), delta(1), epsilon(1). F(0) has three main subunits: a(1), b(2) and c(10-14). The alpha and beta chains form an alternating ring which encloses part of the gamma chain. F(1) is attached to F(0) by a central stalk formed by the gamma and epsilon chains, while a peripheral stalk is formed by the delta and b chains.

It localises to the cell membrane. Functionally, f(1)F(0) ATP synthase produces ATP from ADP in the presence of a proton or sodium gradient. F-type ATPases consist of two structural domains, F(1) containing the extramembraneous catalytic core and F(0) containing the membrane proton channel, linked together by a central stalk and a peripheral stalk. During catalysis, ATP synthesis in the catalytic domain of F(1) is coupled via a rotary mechanism of the central stalk subunits to proton translocation. Component of the F(0) channel, it forms part of the peripheral stalk, linking F(1) to F(0). The chain is ATP synthase subunit b from Symbiobacterium thermophilum (strain DSM 24528 / JCM 14929 / IAM 14863 / T).